The primary structure comprises 291 residues: Diaminopimelate epimerase (291 aa).

Positions 13, 46, and 66 each coordinate substrate. Cys-75 (proton donor) is an active-site residue. Substrate is bound by residues 76–77 (GN), Asn-156, Asn-189, and 207–208 (ER). The active-site Proton acceptor is the Cys-216. Substrate is bound at residue 217-218 (GS).

Belongs to the diaminopimelate epimerase family. In terms of assembly, homodimer.

It localises to the cytoplasm. The catalysed reaction is (2S,6S)-2,6-diaminopimelate = meso-2,6-diaminopimelate. The protein operates within amino-acid biosynthesis; L-lysine biosynthesis via DAP pathway; DL-2,6-diaminopimelate from LL-2,6-diaminopimelate: step 1/1. Functionally, catalyzes the stereoinversion of LL-2,6-diaminopimelate (L,L-DAP) to meso-diaminopimelate (meso-DAP), a precursor of L-lysine and an essential component of the bacterial peptidoglycan. The polypeptide is Diaminopimelate epimerase (Rhodospirillum centenum (strain ATCC 51521 / SW)).